The chain runs to 100 residues: Proline-rich protein 15-like protein (100 aa).

Residues 26 to 100 (PDTYTQSEGG…LFDDREGKGQ (75 aa)) form a disordered region. The segment covering 53 to 62 (RLEKIVDKNT) has biased composition (basic and acidic residues).

Belongs to the PRR15 family.

This Bos taurus (Bovine) protein is Proline-rich protein 15-like protein (PRR15L).